The sequence spans 194 residues: Thymidine kinase (194 aa).

ATP is bound by residues 15–22 (GSMFSGKS) and 88–91 (DEVQ). Glu-89 serves as the catalytic Proton acceptor. The Zn(2+) site is built by Cys-145, Cys-148, Cys-183, and His-186.

Belongs to the thymidine kinase family. In terms of assembly, homotetramer.

The protein localises to the cytoplasm. The enzyme catalyses thymidine + ATP = dTMP + ADP + H(+). In Bacillus velezensis (strain DSM 23117 / BGSC 10A6 / LMG 26770 / FZB42) (Bacillus amyloliquefaciens subsp. plantarum), this protein is Thymidine kinase.